Consider the following 96-residue polypeptide: Co-chaperonin GroES (96 aa).

It belongs to the GroES chaperonin family. Heptamer of 7 subunits arranged in a ring. Interacts with the chaperonin GroEL.

It localises to the cytoplasm. In terms of biological role, together with the chaperonin GroEL, plays an essential role in assisting protein folding. The GroEL-GroES system forms a nano-cage that allows encapsulation of the non-native substrate proteins and provides a physical environment optimized to promote and accelerate protein folding. GroES binds to the apical surface of the GroEL ring, thereby capping the opening of the GroEL channel. The sequence is that of Co-chaperonin GroES from Aliivibrio fischeri (strain ATCC 700601 / ES114) (Vibrio fischeri).